The sequence spans 309 residues: MEMO1 family protein C4H3.04c (309 aa).

It belongs to the MEMO1 family.

This chain is MEMO1 family protein C4H3.04c, found in Schizosaccharomyces pombe (strain 972 / ATCC 24843) (Fission yeast).